The primary structure comprises 200 residues: Holliday junction branch migration complex subunit RuvA (200 aa).

A domain I region spans residues 1-63; that stretch reads MIASVRGEVL…EDSMTLYGFP (63 aa). A domain II region spans residues 64-142; sequence DSESKELFGL…AVGSTSGAVP (79 aa). A flexible linker region spans residues 142–146; it reads PLGAG. The domain III stretch occupies residues 147-200; the sequence is GGGSVRDQIVEALVGLGFPAKQAEQATDSVLAEAPESTTSSALRSALSLLGKTR.

This sequence belongs to the RuvA family. In terms of assembly, homotetramer. Forms an RuvA(8)-RuvB(12)-Holliday junction (HJ) complex. HJ DNA is sandwiched between 2 RuvA tetramers; dsDNA enters through RuvA and exits via RuvB. An RuvB hexamer assembles on each DNA strand where it exits the tetramer. Each RuvB hexamer is contacted by two RuvA subunits (via domain III) on 2 adjacent RuvB subunits; this complex drives branch migration. In the full resolvosome a probable DNA-RuvA(4)-RuvB(12)-RuvC(2) complex forms which resolves the HJ.

It localises to the cytoplasm. Functionally, the RuvA-RuvB-RuvC complex processes Holliday junction (HJ) DNA during genetic recombination and DNA repair, while the RuvA-RuvB complex plays an important role in the rescue of blocked DNA replication forks via replication fork reversal (RFR). RuvA specifically binds to HJ cruciform DNA, conferring on it an open structure. The RuvB hexamer acts as an ATP-dependent pump, pulling dsDNA into and through the RuvAB complex. HJ branch migration allows RuvC to scan DNA until it finds its consensus sequence, where it cleaves and resolves the cruciform DNA. The chain is Holliday junction branch migration complex subunit RuvA from Rhodococcus opacus (strain B4).